A 172-amino-acid chain; its full sequence is Melanocortin-2 receptor accessory protein (172 aa).

Residues 38–58 traverse the membrane as a helical segment; that stretch reads IVIAFWVSLAAFVVLLFLILL. Disordered stretches follow at residues 105-130 and 152-172; these read QAQA…SSST and PLVR…QLQS.

It belongs to the MRAP family. Homodimer and heterodimer. Forms antiparallel homodimers and heterodimers with MRAP2. Interacts with MC1R, MC2R, MC3R, MC4R and MC5R.

Its subcellular location is the cell membrane. It localises to the endoplasmic reticulum membrane. Its function is as follows. Modulator of melanocortin receptors (MC1R, MC2R, MC3R, MC4R and MC5R). Acts by increasing ligand-sensitivity of melanocortin receptors and enhancing generation of cAMP by the receptors. Required both for MC2R trafficking to the cell surface of adrenal cells and for signaling in response to corticotropin (ACTH). May be involved in the intracellular trafficking pathways in adipocyte cells. The chain is Melanocortin-2 receptor accessory protein (MRAP) from Pan troglodytes (Chimpanzee).